The chain runs to 243 residues: Uridylate kinase (243 aa).

14-17 (KLSG) is a binding site for ATP. Gly-57 is a UMP binding site. ATP-binding residues include Gly-58 and Arg-62. UMP contacts are provided by residues Asp-77 and 139–146 (TGRPYFTT). Asn-167, Tyr-173, and Asp-176 together coordinate ATP.

This sequence belongs to the UMP kinase family. As to quaternary structure, homohexamer.

It is found in the cytoplasm. It carries out the reaction UMP + ATP = UDP + ADP. It participates in pyrimidine metabolism; CTP biosynthesis via de novo pathway; UDP from UMP (UMPK route): step 1/1. Its activity is regulated as follows. Inhibited by UTP. In terms of biological role, catalyzes the reversible phosphorylation of UMP to UDP. This chain is Uridylate kinase, found in Mycoplasmopsis pulmonis (strain UAB CTIP) (Mycoplasma pulmonis).